The following is a 35-amino-acid chain: Pheromone-binding protein (35 aa).

It belongs to the PBP/GOBP family. As to expression, antenna.

In terms of biological role, this major soluble protein in olfactory sensilla of male moths might serve to solubilize the extremely hydrophobic pheromone molecules and to transport pheromone through the aqueous lymph to receptors located on olfactory cilia. This Hyalophora cecropia (Cecropia moth) protein is Pheromone-binding protein.